Reading from the N-terminus, the 162-residue chain is Heat shock protein beta-6 (162 aa).

An involved in stabilization of the HSPB1:HSBP6 heterodimer region spans residues 1-72 (MEIRVPVQPS…PTAQVPTDPG (72 aa)). S16 carries the post-translational modification Phosphoserine. Q31 is covalently cross-linked (Isoglutamyl lysine isopeptide (Gln-Lys) (interchain with K-162)). The 107-residue stretch at 56–162 (RAPSVALPTA…ASLPSPPAAK (107 aa)) folds into the sHSP domain. Q66 carries the post-translational modification Deamidated glutamine. S157 bears the Phosphoserine mark. Residue K162 forms an Isoglutamyl lysine isopeptide (Lys-Gln) (interchain with Q-31) linkage.

The protein belongs to the small heat shock protein (HSP20) family. Homodimer. Small heat shock proteins form high molecular mass oligomers containing variable number of monomers; these oligomers display a very flexible quaternary structure easily exchanging their subunits. Heterooligomer with HSPB1; formed through oligomerization of HSPB1:HSBP6 dimers; subunit exchange leads to formation of at least two different heterooligomeric complexes, differing in variable quantities of HSPB1 and HSPB6 homodimers in addition to HSPB1:HSPB6 heterodimers. Heterooligomer with CRYAB; large heterooligomers consist of CRYAB homodimers and HSPB5:HSPB6 heterodimers but lacking HSPB6 homodimers. Interacts with BAG3. Interacts (phosphorylated) with YWHAZ. Interacts with PDE4A and PDE4D; required for maintenance of the non-phosphorylated state of HSPB6 under basal conditions. Interacts with KDR. Interacts with PRKD1. The N-terminus is blocked. Post-translationally, phosphorylated at Ser-16 by PKA and probably PKD1K; required to protect cardiomyocytes from apoptosis. Widely expressed. High expression in muscle tissues.

The protein localises to the cytoplasm. It is found in the nucleus. The protein resides in the secreted. Its function is as follows. Small heat shock protein which functions as a molecular chaperone probably maintaining denatured proteins in a folding-competent state. Seems to have versatile functions in various biological processes. Plays a role in regulating muscle function such as smooth muscle vasorelaxation and cardiac myocyte contractility. May regulate myocardial angiogenesis implicating KDR. Overexpression mediates cardioprotection and angiogenesis after induced damage. Stabilizes monomeric YWHAZ thereby supporting YWHAZ chaperone-like activity. In Rattus norvegicus (Rat), this protein is Heat shock protein beta-6 (Hspb6).